A 50-amino-acid polypeptide reads, in one-letter code: Bacteriocin-like protein SboX (50 aa).

In Bacillus subtilis (strain 168), this protein is Bacteriocin-like protein SboX (sboX).